The primary structure comprises 608 residues: Phosphogluconate dehydratase (608 aa).

2 residues coordinate [4Fe-4S] cluster: Cys154 and Cys221.

It belongs to the IlvD/Edd family. It depends on [4Fe-4S] cluster as a cofactor.

The catalysed reaction is 6-phospho-D-gluconate = 2-dehydro-3-deoxy-6-phospho-D-gluconate + H2O. Its pathway is carbohydrate metabolism; Entner-Doudoroff pathway. Its function is as follows. Catalyzes the dehydration of 6-phospho-D-gluconate to 2-dehydro-3-deoxy-6-phospho-D-gluconate. This chain is Phosphogluconate dehydratase, found in Helicobacter pylori (strain J99 / ATCC 700824) (Campylobacter pylori J99).